The chain runs to 347 residues: Mitochondrial glycine transporter (347 aa).

Solcar repeat units lie at residues 18 to 102 (SKPT…LRTA), 138 to 222 (LSHT…SKRS), and 247 to 331 (STAS…LIMW). 6 consecutive transmembrane segments (helical) span residues 24–49 (FAAG…TRVQ), 77–103 (GTLP…RTAV), 144–169 (LITG…VRYE), 197–220 (GFGA…EQSK), 251–277 (INFI…KTRV), and 306–324 (GLGL…AWTV).

This sequence belongs to the mitochondrial carrier (TC 2.A.29) family. SLC25A38 subfamily.

Its subcellular location is the mitochondrion inner membrane. It catalyses the reaction glycine(in) = glycine(out). Its function is as follows. Mitochondrial glycine transporter that imports glycine into the mitochondrial matrix. Plays an important role in providing glycine for the first enzymatic step in heme biosynthesis, the condensation of glycine with succinyl-CoA to produce 5-aminolevulinate (ALA) in the mitochondrial matrix. The polypeptide is Mitochondrial glycine transporter (Coccidioides immitis (strain RS) (Valley fever fungus)).